We begin with the raw amino-acid sequence, 416 residues long: Deferrochelatase (416 aa).

The segment at residues 1–28 is a signal peptide (tat-type signal); it reads MSDEQKKPEQIHRRDILKWGAMAGAAVA. 241-243 is a heme b binding site; the sequence is GTG. Positions 293 to 318 are disordered; it reads QEDTFGRRKSSGAPFGQKKETDPVKL. Heme b contacts are provided by His-326 and Arg-339.

The protein belongs to the DyP-type peroxidase family. As to quaternary structure, component of the iron transporter efeUOB/M complex composed of EfeU, EfeM and EfeB; EfeU is essential for the complex formation. Requires heme b as cofactor. In terms of processing, exported by the Tat system. The position of the signal peptide cleavage has not been experimentally proven.

The protein localises to the secreted. Its subcellular location is the cell membrane. The enzyme catalyses heme b + 2 H(+) = protoporphyrin IX + Fe(2+). The catalysed reaction is 2 Fe(2+) + H2O2 + 2 H(+) = 2 Fe(3+) + 2 H2O. In terms of biological role, involved in the recovery of exogenous heme iron. Extracts iron from heme while preserving the protoporphyrin ring intact. Part of the iron transporter system efeUOB/M involved in iron import. Catalyzes the peroxide-mediated oxidation of Fe(2+) into Fe(3+); EfeM binds Fe(3+) and delivers it to the cell membrane permease EfeU. The chain is Deferrochelatase from Bacillus subtilis (strain 168).